Reading from the N-terminus, the 680-residue chain is Dipeptidyl carboxypeptidase (680 aa).

Residue histidine 469 participates in Zn(2+) binding. The active site involves glutamate 470. Zn(2+) contacts are provided by histidine 473 and histidine 476.

This sequence belongs to the peptidase M3 family. Zn(2+) serves as cofactor.

It localises to the cytoplasm. It catalyses the reaction Hydrolysis of unblocked, C-terminal dipeptides from oligopeptides, with broad specificity. Does not hydrolyze bonds in which P1' is Pro, or both P1 and P1' are Gly.. Its function is as follows. Removes dipeptides from the C-termini of N-blocked tripeptides, tetrapeptides and larger peptides. The chain is Dipeptidyl carboxypeptidase (dcp) from Salmonella typhimurium (strain LT2 / SGSC1412 / ATCC 700720).